The following is a 404-amino-acid chain: Serine/threonine transporter SstT (404 aa).

9 helical membrane passes run 17–37, 44–64, 75–95, 138–158, 179–199, 212–232, 287–307, 319–339, and 354–374; these read IGIG…VTAI, FVGA…VQAI, MTLI…VAVI, ALAT…GLAL, IVVW…FSTV, LLIL…NPLL, IPLG…VLTL, FLTA…ASGV, and FGIS…VGVI.

Belongs to the dicarboxylate/amino acid:cation symporter (DAACS) (TC 2.A.23) family.

Its subcellular location is the cell membrane. It catalyses the reaction L-serine(in) + Na(+)(in) = L-serine(out) + Na(+)(out). It carries out the reaction L-threonine(in) + Na(+)(in) = L-threonine(out) + Na(+)(out). Involved in the import of serine and threonine into the cell, with the concomitant import of sodium (symport system). The chain is Serine/threonine transporter SstT from Streptococcus equi subsp. zooepidemicus (strain H70).